Reading from the N-terminus, the 267-residue chain is Myb-related protein Hv1 (267 aa).

2 consecutive HTH myb-type domains span residues 9–61 and 62–116; these read KAHT…INYL and RPDL…RRKL. DNA-binding regions (H-T-H motif) lie at residues 37–61 and 89–112; these read WRSL…INYL and WSLI…NTHI.

Germinating seed and apical meristem of shoot and root.

The protein resides in the nucleus. Its function is as follows. Possible transcription activator in response to an external signal. May be involved in the regulation of flavonoid biosynthesis. The protein is Myb-related protein Hv1 (MYB1) of Hordeum vulgare (Barley).